Consider the following 261-residue polypeptide: tRNA pseudouridine synthase A (261 aa).

D51 serves as the catalytic Nucleophile. Y109 contacts substrate.

This sequence belongs to the tRNA pseudouridine synthase TruA family. Homodimer.

It carries out the reaction uridine(38/39/40) in tRNA = pseudouridine(38/39/40) in tRNA. Formation of pseudouridine at positions 38, 39 and 40 in the anticodon stem and loop of transfer RNAs. The chain is tRNA pseudouridine synthase A from Haemophilus ducreyi (strain 35000HP / ATCC 700724).